A 120-amino-acid chain; its full sequence is Large ribosomal subunit protein uL18 (120 aa).

This sequence belongs to the universal ribosomal protein uL18 family. In terms of assembly, part of the 50S ribosomal subunit; part of the 5S rRNA/L5/L18/L25 subcomplex. Contacts the 5S and 23S rRNAs.

This is one of the proteins that bind and probably mediate the attachment of the 5S RNA into the large ribosomal subunit, where it forms part of the central protuberance. The polypeptide is Large ribosomal subunit protein uL18 (Bordetella bronchiseptica (strain ATCC BAA-588 / NCTC 13252 / RB50) (Alcaligenes bronchisepticus)).